We begin with the raw amino-acid sequence, 338 residues long: MTGNSSNGYGVSLVGSGSATPSQIVSNDQLALRVDTNDEWVKTRTGIRERRIIGADESLTDLCVAAAKAAVDMAGWGVESIEMVLIATSTPDDLFGMAPKVQSKLGATRAVAFDLTAACSGFLFGLVSAAQFLQNGSFKRAVVIGADQLSGWVDWDDRSSCVLFGDGAGAIAIEATAEEDDLIGFKMKSDGSRGDCLNLAQKRNFVPLVESYQTQKGDFSPIKMNGQEVYKFAVREVPSLLKDVLQTYGIVPESLDWLLLHQANQRILNAVADRFSIPHHKVLTNLANYGNTSAATIPIMLDEAVRDGKVQSGHLIASSGFGAGLSWGVALFRWHGPF.

Active-site residues include cysteine 119 and histidine 261. The segment at 262-266 is ACP-binding; it reads QANQR. Asparagine 291 is a catalytic residue.

It belongs to the thiolase-like superfamily. FabH family. In terms of assembly, homodimer.

Its subcellular location is the cytoplasm. The enzyme catalyses malonyl-[ACP] + acetyl-CoA + H(+) = 3-oxobutanoyl-[ACP] + CO2 + CoA. Its pathway is lipid metabolism; fatty acid biosynthesis. Functionally, catalyzes the condensation reaction of fatty acid synthesis by the addition to an acyl acceptor of two carbons from malonyl-ACP. Catalyzes the first condensation reaction which initiates fatty acid synthesis and may therefore play a role in governing the total rate of fatty acid production. Possesses both acetoacetyl-ACP synthase and acetyl transacylase activities. Its substrate specificity determines the biosynthesis of branched-chain and/or straight-chain of fatty acids. The chain is Beta-ketoacyl-[acyl-carrier-protein] synthase III from Prochlorococcus marinus (strain SARG / CCMP1375 / SS120).